The primary structure comprises 274 residues: MENSQELTPWQRLTIARMLERPTSLEYIDLIFDSFMEFHGDRAFGDDAAIVGGVAEFNGMPVTVIGQQKGRNTNENIKRNFGMPSPEGYRKALRLMKQAEKFNRPLICFVDTSGAYCGVEAEQRGQGEAIAKNLISMANLKIPVISVVIGEGGSGGALAMAVADEVWMLENSVYSLLSPEGFASILWKDSSRAKEAAEVMKITADDLKGYGIIDKVIKEPDGGAQNDITMVANALRENLKKAIEGLSSTGINELLDNRYNKFRQIGKFIENEDN.

The CoA carboxyltransferase C-terminal domain maps to 1-245; sequence MENSQELTPW…RENLKKAIEG (245 aa).

It belongs to the AccA family. In terms of assembly, acetyl-CoA carboxylase is a heterohexamer composed of biotin carboxyl carrier protein (AccB), biotin carboxylase (AccC) and two subunits each of ACCase subunit alpha (AccA) and ACCase subunit beta (AccD).

It localises to the cytoplasm. The enzyme catalyses N(6)-carboxybiotinyl-L-lysyl-[protein] + acetyl-CoA = N(6)-biotinyl-L-lysyl-[protein] + malonyl-CoA. The protein operates within lipid metabolism; malonyl-CoA biosynthesis; malonyl-CoA from acetyl-CoA: step 1/1. In terms of biological role, component of the acetyl coenzyme A carboxylase (ACC) complex. First, biotin carboxylase catalyzes the carboxylation of biotin on its carrier protein (BCCP) and then the CO(2) group is transferred by the carboxyltransferase to acetyl-CoA to form malonyl-CoA. This chain is Acetyl-coenzyme A carboxylase carboxyl transferase subunit alpha, found in Clostridium acetobutylicum (strain ATCC 824 / DSM 792 / JCM 1419 / IAM 19013 / LMG 5710 / NBRC 13948 / NRRL B-527 / VKM B-1787 / 2291 / W).